We begin with the raw amino-acid sequence, 637 residues long: Zinc finger protein rsv2 (637 aa).

Disordered stretches follow at residues 1–41 (MDTT…SKMN), 145–164 (SNHQ…PTSA), 169–207 (IITA…QPFS), 221–363 (TGAI…STAL), 404–427 (QDSF…TRSY), and 440–558 (SVNP…GAQR). Residues 172–189 (ANSSPSGNAGSNASASMS) are compositionally biased toward low complexity. A compositionally biased stretch (polar residues) spans 196-207 (PSASTINDQPFS). Basic and acidic residues predominate over residues 279 to 296 (SDLKRSLGHNQKSDRVSK). Residues 298–344 (VSPQHQANPSTLNNPLKTQNFDSSKNLYTDNKDSSLVSPTGLQSRME) are compositionally biased toward polar residues. Composition is skewed to basic and acidic residues over residues 345-355 (QNPEVRAHPMK) and 404-413 (QDSFNKESIK). Over residues 455–471 (VPSNTTISSSPPLTSPV) the composition is skewed to low complexity. Polar residues-rich tracts occupy residues 472-498 (KTSA…QSAA) and 508-527 (YYNT…QKVS). The segment covering 544–554 (TTPTNSSTTAT) has biased composition (low complexity). A C2H2-type 1 zinc finger spans residues 572–603 (VRCTLQNRVTGEICNTVFSRTYDLIRHQDTIH). A C2H2-type 2; degenerate zinc finger spans residues 610–635 (FRCEICGDQRHFSRHDALVRHLRVKH).

The protein localises to the nucleus. The chain is Zinc finger protein rsv2 (rsv2) from Schizosaccharomyces pombe (strain 972 / ATCC 24843) (Fission yeast).